A 357-amino-acid polypeptide reads, in one-letter code: Glutamine synthetase root isozyme B (357 aa).

Residues 19–99 (IIAEYIWVGG…VICDVYTPAG (81 aa)) enclose the GS beta-grasp domain. In terms of domain architecture, GS catalytic spans 106–357 (KRYNAAKIFS…AETTILWKKS (252 aa)).

This sequence belongs to the glutamine synthetase family. In terms of assembly, homooctamer.

The protein localises to the cytoplasm. It carries out the reaction L-glutamate + NH4(+) + ATP = L-glutamine + ADP + phosphate + H(+). The polypeptide is Glutamine synthetase root isozyme B (GS3B) (Pisum sativum (Garden pea)).